The chain runs to 161 residues: Cyclic pyranopterin monophosphate synthase (161 aa).

Residues 75–77 and 113–114 contribute to the substrate site; these read LCH and ME. Aspartate 128 is an active-site residue.

Belongs to the MoaC family. Homohexamer; trimer of dimers.

The enzyme catalyses (8S)-3',8-cyclo-7,8-dihydroguanosine 5'-triphosphate = cyclic pyranopterin phosphate + diphosphate. The protein operates within cofactor biosynthesis; molybdopterin biosynthesis. In terms of biological role, catalyzes the conversion of (8S)-3',8-cyclo-7,8-dihydroguanosine 5'-triphosphate to cyclic pyranopterin monophosphate (cPMP). This chain is Cyclic pyranopterin monophosphate synthase, found in Escherichia coli O139:H28 (strain E24377A / ETEC).